A 703-amino-acid polypeptide reads, in one-letter code: DnaJ homolog subfamily C member 14 (703 aa).

The segment covering 1-11 (MAQKHPGERRL) has biased composition (basic and acidic residues). The segment at 1 to 229 (MAQKHPGERR…GRHRLARKRS (229 aa)) is disordered. A compositionally biased stretch (low complexity) spans 17–28 (SGGTSLSTSGSS). A compositionally biased stretch (pro residues) spans 75–84 (HGPPRGPGPP). Acidic residues predominate over residues 91 to 102 (DESETGSEESGV). Positions 121–133 (SFLSIPSACNCQG) are enriched in polar residues. Acidic residues predominate over residues 163 to 176 (GEDEELEEEYDDEE). The segment covering 193–202 (PLSRRQKHRF) has biased composition (basic residues). Residues 203-218 (LIKEDVRDSGRREPKA) show a composition bias toward basic and acidic residues. Over residues 219-228 (PGRHRLARKR) the composition is skewed to basic residues. Transmembrane regions (helical) follow at residues 305–325 (MMFQ…IRIL) and 327–347 (VVGA…QLGW). One can recognise a J domain in the interval 444-508 (NPFHVLGVEA…ERRKEYEMKR (65 aa)). Disordered regions lie at residues 622 to 643 (FGSR…PPAD) and 659 to 703 (MSNG…PFQR). Over residues 673-684 (GTTSTSRPNSSV) the composition is skewed to polar residues. The span at 691 to 703 (PKRRKKVRRPFQR) shows a compositional bias: basic residues.

Interacts with the FxxxFxxxF motif of DRD1 via its C-terminal domain.

It is found in the endoplasmic reticulum membrane. Functionally, regulates the export of target proteins, such as DRD1, from the endoplasmic reticulum to the cell surface. This is DnaJ homolog subfamily C member 14 (Dnajc14) from Mus musculus (Mouse).